Consider the following 72-residue polypeptide: Exodeoxyribonuclease 7 small subunit (72 aa).

This sequence belongs to the XseB family. As to quaternary structure, heterooligomer composed of large and small subunits.

The protein resides in the cytoplasm. The enzyme catalyses Exonucleolytic cleavage in either 5'- to 3'- or 3'- to 5'-direction to yield nucleoside 5'-phosphates.. Functionally, bidirectionally degrades single-stranded DNA into large acid-insoluble oligonucleotides, which are then degraded further into small acid-soluble oligonucleotides. The chain is Exodeoxyribonuclease 7 small subunit from Chlamydia trachomatis serovar A (strain ATCC VR-571B / DSM 19440 / HAR-13).